The primary structure comprises 193 residues: Ion-translocating oxidoreductase complex subunit A (193 aa).

The next 6 helical transmembrane spans lie at 5–25 (ALLLLSTALVNNVVLVKFLGL), 39–59 (LGMGLATTFVITLAAAASWML), 62–82 (WLLAPFDLGFLRILSFILVIA), 102–122 (SLGIYLPLITTNCAVLGVALL), 134–154 (VLFGFGSALGFTLVLLIFAGL), and 172–192 (AAFITISLLSLAFMGLSGLVA).

Belongs to the NqrDE/RnfAE family. The complex is composed of six subunits: RnfA, RnfB, RnfC, RnfD, RnfE and RnfG.

It localises to the cell inner membrane. In terms of biological role, part of a membrane-bound complex that couples electron transfer with translocation of ions across the membrane. This Aromatoleum aromaticum (strain DSM 19018 / LMG 30748 / EbN1) (Azoarcus sp. (strain EbN1)) protein is Ion-translocating oxidoreductase complex subunit A.